The primary structure comprises 202 residues: MLLWFLSGSLLLFGTFDVWYFLRGLWVALRCCFQSPIRDVLAEQVVHGRVLLHDMDFMCHMNNARYLRECDFARFAHGTRIGLFMAARALKATMVVGATTIRYRRSLALGEGFELRTRIVSWDEKSFYLEQRFVSKSDGFISAVMLCRQNVIRGSPQNILEFLCKRKVDCPDISEDLQHWIRFISASSQALRAESGLDDKTK.

Residues 1 to 24 form the signal peptide; sequence MLLWFLSGSLLLFGTFDVWYFLRG.

It belongs to the THEM6 family.

It is found in the secreted. This is Protein THEM6 (them6) from Danio rerio (Zebrafish).